A 311-amino-acid polypeptide reads, in one-letter code: Heme A synthase (311 aa).

Residues 1–6 are Cytoplasmic-facing; the sequence is MQRFIK. A helical transmembrane segment spans residues 7–27; it reads WLAVITSLDLLVVLLGGALVT. The Extracellular segment spans residues 28 to 62; sequence KTGSGQGCGKSWPLCNGEFVPSNLSMETIIELSHR. Cys35 and Cys42 are oxidised to a cystine. Residue Glu58 is part of the active site. A heme o-binding site is contributed by His61. Residues 63-83 traverse the membrane as a helical segment; the sequence is LTSGSAGILVTLLCILSWKYY. Over 84–91 the chain is Cytoplasmic; that stretch reads KHVRETKT. Residues 92 to 112 traverse the membrane as a helical segment; sequence LAILSFVFLVAQALMGAAAVV. The Extracellular portion of the chain corresponds to 113 to 121; sequence WGQMPAVLA. A helical transmembrane segment spans residues 122–142; that stretch reads IHFGISLISFASVILLTCLIF. His123 contributes to the heme o binding site. At 143–159 the chain is on the cytoplasmic side; that stretch reads EIDQKFDARSLIMDKKM. Residues 160–180 form a helical membrane-spanning segment; it reads KFHIYGVTIYSYIVVYTGALV. At 181-211 the chain is on the extracellular side; the sequence is RHERATLACPDFPLCSKSRPMPTQLHEWVQM. An intrachain disulfide couples Cys189 to Cys195. Residues 212–232 form a helical membrane-spanning segment; sequence GHRVAAMLIFAWILYAMIIAI. His213 contacts heme b. Topologically, residues 233–243 are cytoplasmic; that stretch reads RHYKQQRVVYW. The helical transmembrane segment at 244–264 threads the bilayer; that stretch reads GWIISFILVTLQAIVGILVVF. The Extracellular segment spans residues 265-271; the sequence is TNASLAM. The helical transmembrane segment at 272-292 threads the bilayer; sequence ALLHSLFISCLFAVLCYLVMI. Residue His275 coordinates heme b. The Cytoplasmic portion of the chain corresponds to 293–311; that stretch reads GTRSTVNAKETESTSKQTK.

This sequence belongs to the COX15/CtaA family. Type 1 subfamily. In terms of assembly, interacts with CtaB. It depends on heme b as a cofactor.

It is found in the cell membrane. The enzyme catalyses Fe(II)-heme o + 2 A + H2O = Fe(II)-heme a + 2 AH2. The protein operates within porphyrin-containing compound metabolism; heme A biosynthesis; heme A from heme O: step 1/1. Its function is as follows. Catalyzes the conversion of heme O to heme A by two successive hydroxylations of the methyl group at C8. The first hydroxylation forms heme I, the second hydroxylation results in an unstable dihydroxymethyl group, which spontaneously dehydrates, resulting in the formyl group of heme A. The chain is Heme A synthase from Bacillus mycoides (strain KBAB4) (Bacillus weihenstephanensis).